A 210-amino-acid polypeptide reads, in one-letter code: MADAKELKQVLTGPIISNNPIALQILGVCSALAVTSKMETALVMTIALTAVTALSNLFISMIRNHIPSSVRIIVQMTIIASLVIVVDQVLQAYAYDVAKQLSVFVGLIITNCIVMGRAEAYAMKTPPMMSFMDGIGNGLGYGAILLSVGFVRELFGNGSLFGVEILSKISEGGWYQPNGLLLLPPSAFFLIASLIWIIRTIKPEQVEAKG.

Helical transmembrane passes span P14 to V34, L42 to I62, I72 to A92, V103 to M123, F131 to V151, and N178 to I198.

It belongs to the NqrDE/RnfAE family. Composed of six subunits; NqrA, NqrB, NqrC, NqrD, NqrE and NqrF.

Its subcellular location is the cell inner membrane. It carries out the reaction a ubiquinone + n Na(+)(in) + NADH + H(+) = a ubiquinol + n Na(+)(out) + NAD(+). NQR complex catalyzes the reduction of ubiquinone-1 to ubiquinol by two successive reactions, coupled with the transport of Na(+) ions from the cytoplasm to the periplasm. NqrA to NqrE are probably involved in the second step, the conversion of ubisemiquinone to ubiquinol. The chain is Na(+)-translocating NADH-quinone reductase subunit D from Shewanella loihica (strain ATCC BAA-1088 / PV-4).